Reading from the N-terminus, the 287-residue chain is ATP synthase gamma chain (287 aa).

The protein belongs to the ATPase gamma chain family. As to quaternary structure, F-type ATPases have 2 components, CF(1) - the catalytic core - and CF(0) - the membrane proton channel. CF(1) has five subunits: alpha(3), beta(3), gamma(1), delta(1), epsilon(1). CF(0) has three main subunits: a, b and c.

The protein resides in the cell inner membrane. Functionally, produces ATP from ADP in the presence of a proton gradient across the membrane. The gamma chain is believed to be important in regulating ATPase activity and the flow of protons through the CF(0) complex. This is ATP synthase gamma chain from Xylella fastidiosa (strain M12).